A 92-amino-acid chain; its full sequence is MTKLAQWLWALALLGSTWAALTMGALGLELPSSCREVLWPLPAYLLVSAGCYALGTVGYRVATFHDCEDAARELQSQIQEARADLTRRGLRF.

Helical transmembrane passes span 8–28 (LWALALLGSTWAALTMGALGL) and 37–57 (VLWPLPAYLLVSAGCYALGTV).

This sequence belongs to the DPM3 family. As to quaternary structure, component of the dolichol-phosphate mannose (DPM) synthase complex composed of DPM1, DPM2 and DPM3; within the complex, associates with DPM1 via its C-terminal domain and with DPM2 via its N-terminal portion. This interaction stabilizes DPM1 protein.

The protein resides in the endoplasmic reticulum membrane. It participates in protein modification; protein glycosylation. Its function is as follows. Stabilizer subunit of the dolichol-phosphate mannose (DPM) synthase complex; tethers catalytic subunit DPM1 to the endoplasmic reticulum. The polypeptide is Dolichol-phosphate mannosyltransferase subunit 3 (DPM3) (Bos taurus (Bovine)).